The sequence spans 329 residues: Endonuclease 8-like 2 (329 aa).

Pro2 (schiff-base intermediate with DNA) is an active-site residue. Residue Glu3 is the Proton donor of the active site. Lys50 serves as the catalytic Proton donor; for beta-elimination activity. Lys50 carries the N6-acetyllysine modification. The residue at position 68 (Ser68) is a Phosphoserine. The interval 88–112 (GPSAQEPSAGPSGSGEPVPSRSAET) is disordered. N6-acetyllysine is present on Lys150. Asn227 contacts DNA. Residues 280–316 (QIYQKEQCPSGHQVMKETFGPPDGLQRLTWWCPQCQP) form an FPG-type zinc finger. The Proton donor; for delta-elimination activity role is filled by Arg306.

It belongs to the FPG family. In terms of assembly, binds EP300.

It is found in the nucleus. It carries out the reaction 2'-deoxyribonucleotide-(2'-deoxyribose 5'-phosphate)-2'-deoxyribonucleotide-DNA = a 3'-end 2'-deoxyribonucleotide-(2,3-dehydro-2,3-deoxyribose 5'-phosphate)-DNA + a 5'-end 5'-phospho-2'-deoxyribonucleoside-DNA + H(+). Acetylation of Lys-50 leads to loss of DNA nicking activity. Involved in base excision repair of DNA damaged by oxidation or by mutagenic agents. Has DNA glycosylase activity towards 5-hydroxyuracil and other oxidized derivatives of cytosine with a preference for mismatched double-stranded DNA (DNA bubbles). Has low or no DNA glycosylase activity towards thymine glycol, 2-hydroxyadenine, hypoxanthine and 8-oxoguanine. Has AP (apurinic/apyrimidinic) lyase activity and introduces nicks in the DNA strand. Cleaves the DNA backbone by beta-delta elimination to generate a single-strand break at the site of the removed base with both 3'- and 5'-phosphates. The sequence is that of Endonuclease 8-like 2 (Neil2) from Mus musculus (Mouse).